The sequence spans 35 residues: Beta/omega-theraphotoxin-Bp1a (35 aa).

3 cysteine pairs are disulfide-bonded: Cys-2/Cys-16, Cys-9/Cys-21, and Cys-15/Cys-28.

This sequence belongs to the neurotoxin 10 (Hwtx-1) family. 54 (ProTx-1) subfamily. In terms of processing, an unnatural amidation at Ser-35 provokes a 14-fold increased toxin ability to inhibit Nav1.2/SCN2A and a ~2-fold decreased toxin ability to inhibit both Nav1.5/SCN5A and Nav1.7/SCN9A. As to expression, expressed by the venom gland.

It localises to the secreted. Functionally, ion channel impairing toxin that inhibits voltage-gated calcium channel Cav3.1/CACNA1G (IC(50)=53 nM), voltage-gated potassium channels Kv2.1/KCNB1 (IC(50)=411 nM), all sodium channels tested (Nav1.2/SCN2A (IC(50)=60-104 nM), Nav1.5/SCN5A (IC(50)=76-358 nM), Nav1.6/SCN8A (IC(50)=21-133 nM), Nav1.7/SCN9A (IC(50)=51-95 nM), and Nav1.8/SCN10A) as well as the nociceptor cation channel TRPA1 (IC(50)=389 nM). Acts as a potent and selective blocker of voltage-gated calcium channel Cav3.1/CACNA1G, but not of Cav3.2/CACNA1H, and Cav3.3/CACNA1I. On Nav1.7/SCN9A, primarily interacts with the DII and DIV voltage-sensor domains. Also acts as an inhibitor of nociceptor cation channel TRPA1 (IC(50)~389 nM) by binding to the S1-S4 gating domain of TRPA1. It shows moderate affinity for lipid bilayers. This is Beta/omega-theraphotoxin-Bp1a from Bumba pulcherrimaklaasi (Tarantula spider).